Here is a 195-residue protein sequence, read N- to C-terminus: EEVADGQAHGEXVYREEHHEGEKNXHLVXKDEETKLFVGALSWETTEKYGEIEGINVKPNLNRXRXFAXINIKTPNALDDAIKYGTITXAAVVLDKXKXYEVDIKKATPKDAMMMPPMRGGRGGLGLGGAWVAPGSFGYGGGYGGYGGGYGDDAYGGAGYDYYGSGYGGGYGSGYEGYGYNGGYGGYSGPARGGK.

Residues 1–23 form a disordered region; that stretch reads EEVADGQAHGEXVYREEHHEGEK. Over residues 12–23 the composition is skewed to basic and acidic residues; that stretch reads XVYREEHHEGEK. One can recognise an RRM domain in the interval 32 to 48; the sequence is EETKLFVGALSWETTEK. An asymmetric dimethylarginine mark is found at Arg119 and Arg122. Ser173 is subject to Phosphoserine; by CK2.

Post-translationally, extensively phosphorylated on tyrosine residues.

The protein resides in the cytoplasm. It is found in the nucleus. Its function is as follows. May regulate mRNA translation and stability. It binds to poly(A) and poly(U) regions of RNA. This binding is inhibited when the protein is phosphorylated. This chain is Heterogeneous nuclear ribonucleoprotein A/B, found in Artemia salina (Brine shrimp).